Consider the following 440-residue polypeptide: Actin-like protein 7A (440 aa).

Residues 1-29 (MSLDGVWAPQTANIGDGPAKKASDQASMQ) are disordered. Residues 36–56 (ASLKDGPAKRAVWVRRDNAET) form a required for interaction with TES region.

This sequence belongs to the actin family. Interacts (via N-terminus) with TES (via LIM domain 2). Heterodimer with TES; the heterodimer interacts with ENAH to form a heterotrimer. Interacts with ACTL9. Interacts with CYLC1; the interaction may be relevant for proper acrosome attachment to the nuclear envelope. In terms of tissue distribution, detected in testis. Detected at the acrosome of round spermatids (at protein level). Detected in adult and embryonic testis. Detected in developing male germ cells.

Its subcellular location is the cytoplasm. It localises to the cytoskeleton. It is found in the golgi apparatus. The protein resides in the nucleus. The protein localises to the cytoplasmic vesicle. Its subcellular location is the secretory vesicle. It localises to the acrosome. Functionally, essential for normal spermatogenesis and male fertility. Required for normal sperm head morphology, acroplaxome formation, acrosome attachment, and acrosome granule stability. May anchor and stabilize acrosomal adherence to the acroplaxome at least in part by facilitating the presence of F-actin in the subacrosomal space. May play an important role in formation and fusion of Golgi-derived vesicles during acrosome biogenesis. The chain is Actin-like protein 7A (Actl7a) from Mus musculus (Mouse).